Consider the following 271-residue polypeptide: Putative hydro-lyase blr2921 (271 aa).

This sequence belongs to the D-glutamate cyclase family.

The chain is Putative hydro-lyase blr2921 from Bradyrhizobium diazoefficiens (strain JCM 10833 / BCRC 13528 / IAM 13628 / NBRC 14792 / USDA 110).